We begin with the raw amino-acid sequence, 311 residues long: Cell division protein ZipA (311 aa).

The Periplasmic segment spans residues 1–5; it reads MQELR. Residues 6 to 26 form a helical membrane-spanning segment; that stretch reads FVLIVVGALAIMALLFHGLWT. Over 27–311 the chain is Cytoplasmic; the sequence is SKKEGKAKFG…QIVEFKAANA (285 aa). Positions 32-54 are enriched in basic and acidic residues; sequence KAKFGDKPLSKLDLGESEPKESE. A disordered region spans residues 32–60; that stretch reads KAKFGDKPLSKLDLGESEPKESEMYVAPE.

This sequence belongs to the ZipA family. As to quaternary structure, interacts with FtsZ via their C-terminal domains.

The protein resides in the cell inner membrane. Functionally, essential cell division protein that stabilizes the FtsZ protofilaments by cross-linking them and that serves as a cytoplasmic membrane anchor for the Z ring. Also required for the recruitment to the septal ring of downstream cell division proteins. This chain is Cell division protein ZipA, found in Vibrio vulnificus (strain CMCP6).